The following is a 385-amino-acid chain: tRNA pseudouridine synthase D (385 aa).

Catalysis depends on aspartate 65, which acts as the Nucleophile. A TRUD domain is found at glycine 143–lysine 345.

The protein belongs to the pseudouridine synthase TruD family.

The catalysed reaction is uridine(13) in tRNA = pseudouridine(13) in tRNA. Functionally, responsible for synthesis of pseudouridine from uracil-13 in transfer RNAs. The sequence is that of tRNA pseudouridine synthase D from Aquifex aeolicus (strain VF5).